We begin with the raw amino-acid sequence, 544 residues long: Chaperonin GroEL (544 aa).

Residues 29-32 (TLGP), 86-90 (DGTTT), Gly-413, 476-478 (NAL), and Asp-492 contribute to the ATP site.

This sequence belongs to the chaperonin (HSP60) family. Forms a cylinder of 14 subunits composed of two heptameric rings stacked back-to-back. Interacts with the co-chaperonin GroES.

It is found in the cytoplasm. The catalysed reaction is ATP + H2O + a folded polypeptide = ADP + phosphate + an unfolded polypeptide.. In terms of biological role, together with its co-chaperonin GroES, plays an essential role in assisting protein folding. The GroEL-GroES system forms a nano-cage that allows encapsulation of the non-native substrate proteins and provides a physical environment optimized to promote and accelerate protein folding. In Desulfitobacterium hafniense (strain DSM 10664 / DCB-2), this protein is Chaperonin GroEL.